The following is a 465-amino-acid chain: L-seryl-tRNA(Sec) selenium transferase (465 aa).

Lys-294 carries the N6-(pyridoxal phosphate)lysine modification.

Belongs to the SelA family. It depends on pyridoxal 5'-phosphate as a cofactor.

It is found in the cytoplasm. It carries out the reaction L-seryl-tRNA(Sec) + selenophosphate + H(+) = L-selenocysteinyl-tRNA(Sec) + phosphate. Its pathway is aminoacyl-tRNA biosynthesis; selenocysteinyl-tRNA(Sec) biosynthesis; selenocysteinyl-tRNA(Sec) from L-seryl-tRNA(Sec) (bacterial route): step 1/1. Its function is as follows. Converts seryl-tRNA(Sec) to selenocysteinyl-tRNA(Sec) required for selenoprotein biosynthesis. The chain is L-seryl-tRNA(Sec) selenium transferase (selA) from Desulfomicrobium baculatum (Desulfovibrio baculatus).